Here is a 393-residue protein sequence, read N- to C-terminus: Decapping nuclease dom-3 (393 aa).

A disordered region spans residues M1–L37. Over residues G17 to H28 the composition is skewed to basic and acidic residues. Residues R74, E113, and W144–G146 contribute to the substrate site. Mg(2+)-binding residues include E205, E257, D259, E269, and L270. E257 contributes to the substrate binding site. Residues K271 and Q293 each coordinate substrate.

Belongs to the DXO/Dom3Z family. Mg(2+) serves as cofactor.

It catalyses the reaction a 5'-end NAD(+)-phospho-ribonucleoside in mRNA + H2O = a 5'-end phospho-ribonucleoside in mRNA + NAD(+) + H(+). The catalysed reaction is a 5'-end (N(7)-methyl 5'-triphosphoguanosine)-ribonucleoside-ribonucleotide in mRNA + H2O = a (N(7)-methyl 5'-triphosphoguanosine)-nucleoside + a 5'-end phospho-ribonucleoside in mRNA + H(+). The enzyme catalyses a 5'-end triphospho-ribonucleoside in mRNA + H2O = a 5'-end phospho-ribonucleoside in mRNA + diphosphate + H(+). Functionally, decapping enzyme for NAD-capped RNAs: specifically hydrolyzes the nicotinamide adenine dinucleotide (NAD) cap from a subset of RNAs by removing the entire NAD moiety from the 5'-end of an NAD-capped RNA. The NAD-cap is present at the 5'-end of some RNAs and snoRNAs. In contrast to the canonical 5'-end N7 methylguanosine (m7G) cap, the NAD cap promotes mRNA decay. Also acts as a non-canonical decapping enzyme that removes the entire cap structure of m7G capped or incompletely capped RNAs and mediates their subsequent degradation. Specifically degrades pre-mRNAs with a defective 5'-end m7G cap and is part of a pre-mRNA capping quality control. Also possesses RNA 5'-pyrophosphohydrolase activity by hydrolyzing the 5'-end triphosphate to release pyrophosphates. This chain is Decapping nuclease dom-3, found in Caenorhabditis elegans.